The primary structure comprises 78 residues: UPF0335 protein RPR_04100 (78 aa).

It belongs to the UPF0335 family.

The chain is UPF0335 protein RPR_04100 from Rickettsia peacockii (strain Rustic).